The primary structure comprises 261 residues: MSAALTANAASFAIGSVALVERVDLRVEPGELIAIVGPNGAGKSTLLRMLSGDVRPTAGAVRMANRDLSTYSPRELAGRRAVLAQHTNVGFPFSVEEIVWMGADIDRRKAAPLFDRAIREVRLEAFRHRDVTTLSGGEQQRTHFARVLLQLWCGEASYGPGLLLLDEPTSSLDIRHQLDLAEMARRCARDGTTVIAILHDLNLAARFADRILMMHQGALTADGTPSAVIRPDLLARVFDVDLSVSRDSTGAPFVLPQLAKR.

Positions 5 to 241 constitute an ABC transporter domain; that stretch reads LTANAASFAI…DLLARVFDVD (237 aa). Residue 37–44 participates in ATP binding; the sequence is GPNGAGKS.

The protein belongs to the ABC transporter superfamily. Heme (hemin) importer (TC 3.A.1.14.5) family. In terms of assembly, the complex is composed of two ATP-binding proteins (HmuV), two transmembrane proteins (HmuU) and a solute-binding protein (HmuT).

The protein resides in the cell inner membrane. Part of the ABC transporter complex HmuTUV involved in hemin import. Responsible for energy coupling to the transport system. This Rhodopseudomonas palustris (strain BisB5) protein is Hemin import ATP-binding protein HmuV.